Consider the following 793-residue polypeptide: Short transient receptor potential channel 1 (793 aa).

The interval 1–30 is disordered; sequence MMAALYPSTDLSGVSSSSLPSSPSSSSPNE. The Cytoplasmic portion of the chain corresponds to 1–345; it reads MMAALYPSTD…FGQMSGYRRK (345 aa). A compositionally biased stretch (low complexity) spans 15–28; sequence SSSSLPSSPSSSSP. 4 ANK repeats span residues 46–75, 83–109, 111–156, and 158–180; these read LNEKLFLLACDKGDYYMVKKILEENSSGDL, LGRNAVTITIENESLDILQLLLDYGCQ, ADAL…EYST, and MDVAPVILAAHRNNYEILTMLLK. His-189, Cys-193, Cys-195, and Cys-198 together coordinate Zn(2+). An intramembrane region (discontinuously helical) is located at residues 346 to 379; it reads PTCKKIMTVLTVGIFWPVLSLCYLIAPKSQFGRI. At 380–386 the chain is on the cytoplasmic side; it reads IHTPFMK. The chain crosses the membrane as a helical span at residues 387–404; that stretch reads FIIHGASYFTFLLLLNLY. Topologically, residues 405–422 are extracellular; the sequence is SLVYNEDKKNTMGPALER. A helical transmembrane segment spans residues 423–439; the sequence is IDYLLILWIIGMIWSDI. Topologically, residues 440-455 are cytoplasmic; that stretch reads KRLWYEGLEDFLEESR. Residues 456 to 475 form a helical membrane-spanning segment; it reads NQLSFVMNSLYLATFALKVV. The Extracellular segment spans residues 476 to 496; it reads AHNKFHDFADRKDWDAFHPTL. Residues 497-517 traverse the membrane as a helical segment; it reads VAEGLFAFANVLSYLRLFFMY. Topologically, residues 518 to 536 are cytoplasmic; it reads TTSSILGPLQISMGQMLQD. A helical transmembrane segment spans residues 537–558; it reads FGKFLGMFLLVLFSFTIGLTQL. Topologically, residues 559–623 are extracellular; it reads YDKGYTSKEQ…GEELQSFVGA (65 aa). Cys-571 and Cys-576 are oxidised to a cystine. Residues 624 to 644 form a helical membrane-spanning segment; it reads VIVGTYNVVVVIVLTKLLVAM. The Cytoplasmic segment spans residues 645–793; that stretch reads LHKSFQLIAN…SKYAMFYPRN (149 aa).

The protein belongs to the transient receptor (TC 1.A.4) family. STrpC subfamily. TRPC1 sub-subfamily. In terms of assembly, heterotetramer with TRPC4 and/or TRPC5. Forms a heteromeric ion channel with TRPC4, with a 1:3 TRPC1:TRPC4 stoichiometry. Unlike other TRP channel proteins, does not form a homomeric channel. Interacts with TRPC4AP. Interacts with ITPR3. Interacts with MX1 and RNF24. Interacts with FKBP4. Interacts with PLSCR1. Interacts with PKD2L2. Forms a heterotetramer with PKD2 with a 2:2 stoichiometry; has distinct channel properties separate from PKD2 or TRPC1 homomers alone. Activation of PRKCA induces phosphorylation of TRPC1 and subsequent Ca2+ entry into cells.

It localises to the cell membrane. It catalyses the reaction Ca(2+)(in) = Ca(2+)(out). The catalysed reaction is Na(+)(in) = Na(+)(out). It carries out the reaction Li(+)(in) = Li(+)(out). The enzyme catalyses Cs(+)(in) = Cs(+)(out). Its activity is regulated as follows. May be operated by a phosphatidylinositol second messenger system activated by receptor tyrosine kinases or G-protein coupled receptors. Also activated by intracellular calcium store depletion. In terms of biological role, forms a receptor-activated non-selective calcium permeant cation channel. Forms a heteromeric ion channel with TRPC4 or TRPC5 that has reduced calcium permeability compared to the homomeric TRPC4 or TRPC5 channel. Also permeable to monovalent ions including sodium, lithium and cesium ions. The sequence is that of Short transient receptor potential channel 1 (Trpc1) from Mus musculus (Mouse).